We begin with the raw amino-acid sequence, 67 residues long: MGEISITKLLVVAALVVLLFGTKKLRTLGGDLGAAIKGFKKAMNDEDAGAKKDANGDLPAEKLTHKE.

Residues Met-1 to Gly-21 traverse the membrane as a helical segment. Residues Asp-45 to Glu-67 are disordered.

This sequence belongs to the TatA/E family. TatE subfamily.

The protein resides in the cell inner membrane. In terms of biological role, part of the twin-arginine translocation (Tat) system that transports large folded proteins containing a characteristic twin-arginine motif in their signal peptide across membranes. TatE shares overlapping functions with TatA. The sequence is that of Probable Sec-independent protein translocase protein TatE from Escherichia fergusonii (strain ATCC 35469 / DSM 13698 / CCUG 18766 / IAM 14443 / JCM 21226 / LMG 7866 / NBRC 102419 / NCTC 12128 / CDC 0568-73).